A 243-amino-acid polypeptide reads, in one-letter code: tRNA (guanine-N(1)-)-methyltransferase (243 aa).

Residues glycine 108 and 127–132 (LGDFVL) each bind S-adenosyl-L-methionine.

It belongs to the RNA methyltransferase TrmD family. Homodimer.

It is found in the cytoplasm. The enzyme catalyses guanosine(37) in tRNA + S-adenosyl-L-methionine = N(1)-methylguanosine(37) in tRNA + S-adenosyl-L-homocysteine + H(+). Functionally, specifically methylates guanosine-37 in various tRNAs. The protein is tRNA (guanine-N(1)-)-methyltransferase of Streptococcus pyogenes serotype M2 (strain MGAS10270).